Reading from the N-terminus, the 331-residue chain is Adenosine deaminase (331 aa).

Zn(2+) contacts are provided by His12 and His14. Positions 14, 16, and 170 each coordinate substrate. His197 is a binding site for Zn(2+). The Proton donor role is filled by Glu200. Asp278 lines the Zn(2+) pocket.

The protein belongs to the metallo-dependent hydrolases superfamily. Adenosine and AMP deaminases family. Adenosine deaminase subfamily. Zn(2+) is required as a cofactor.

It catalyses the reaction adenosine + H2O + H(+) = inosine + NH4(+). The catalysed reaction is 2'-deoxyadenosine + H2O + H(+) = 2'-deoxyinosine + NH4(+). Functionally, catalyzes the hydrolytic deamination of adenosine and 2-deoxyadenosine. The protein is Adenosine deaminase of Vibrio vulnificus (strain CMCP6).